A 450-amino-acid polypeptide reads, in one-letter code: Trigger factor (450 aa).

The PPIase FKBP-type domain maps to 163–249 (EDFVLIDYQG…LKEIQEQILP (87 aa)). Residues 431-443 (PEVETEVSESAAD) are compositionally biased toward acidic residues. A disordered region spans residues 431–450 (PEVETEVSESAADVEDKTDQ).

It belongs to the FKBP-type PPIase family. Tig subfamily.

The protein localises to the cytoplasm. The enzyme catalyses [protein]-peptidylproline (omega=180) = [protein]-peptidylproline (omega=0). Its function is as follows. Involved in protein export. Acts as a chaperone by maintaining the newly synthesized protein in an open conformation. Functions as a peptidyl-prolyl cis-trans isomerase. The polypeptide is Trigger factor (Desulforapulum autotrophicum (strain ATCC 43914 / DSM 3382 / VKM B-1955 / HRM2) (Desulfobacterium autotrophicum)).